Reading from the N-terminus, the 167-residue chain is Protein YfbM (167 aa).

Monomer.

The polypeptide is Protein YfbM (yfbM) (Escherichia coli (strain K12)).